We begin with the raw amino-acid sequence, 293 residues long: Ribosomal RNA small subunit methyltransferase A (293 aa).

Positions 29, 31, 56, 77, 102, and 127 each coordinate S-adenosyl-L-methionine.

Belongs to the class I-like SAM-binding methyltransferase superfamily. rRNA adenine N(6)-methyltransferase family. RsmA subfamily.

The protein localises to the cytoplasm. The catalysed reaction is adenosine(1518)/adenosine(1519) in 16S rRNA + 4 S-adenosyl-L-methionine = N(6)-dimethyladenosine(1518)/N(6)-dimethyladenosine(1519) in 16S rRNA + 4 S-adenosyl-L-homocysteine + 4 H(+). In terms of biological role, specifically dimethylates two adjacent adenosines (A1518 and A1519) in the loop of a conserved hairpin near the 3'-end of 16S rRNA in the 30S particle. May play a critical role in biogenesis of 30S subunits. This is Ribosomal RNA small subunit methyltransferase A from Geobacillus kaustophilus (strain HTA426).